The primary structure comprises 186 residues: Ribosome-recycling factor (186 aa).

This sequence belongs to the RRF family.

It is found in the cytoplasm. In terms of biological role, responsible for the release of ribosomes from messenger RNA at the termination of protein biosynthesis. May increase the efficiency of translation by recycling ribosomes from one round of translation to another. This Cupriavidus taiwanensis (strain DSM 17343 / BCRC 17206 / CCUG 44338 / CIP 107171 / LMG 19424 / R1) (Ralstonia taiwanensis (strain LMG 19424)) protein is Ribosome-recycling factor.